Consider the following 340-residue polypeptide: Phosphoribosylformylglycinamidine cyclo-ligase (340 aa).

The protein belongs to the AIR synthase family.

The protein resides in the cytoplasm. It catalyses the reaction 2-formamido-N(1)-(5-O-phospho-beta-D-ribosyl)acetamidine + ATP = 5-amino-1-(5-phospho-beta-D-ribosyl)imidazole + ADP + phosphate + H(+). Its pathway is purine metabolism; IMP biosynthesis via de novo pathway; 5-amino-1-(5-phospho-D-ribosyl)imidazole from N(2)-formyl-N(1)-(5-phospho-D-ribosyl)glycinamide: step 2/2. The chain is Phosphoribosylformylglycinamidine cyclo-ligase from Streptococcus pneumoniae serotype 4 (strain ATCC BAA-334 / TIGR4).